The following is a 324-amino-acid chain: Elongation factor P--(R)-beta-lysine ligase (324 aa).

75 to 77 (SPE) lines the substrate pocket. ATP contacts are provided by residues 99 to 101 (RNK) and N108. Y117 serves as a coordination point for substrate. Position 243-244 (243-244 (EL)) interacts with ATP. A substrate-binding site is contributed by E250. Residue G299 participates in ATP binding.

Belongs to the class-II aminoacyl-tRNA synthetase family. EpmA subfamily. In terms of assembly, homodimer.

The catalysed reaction is D-beta-lysine + L-lysyl-[protein] + ATP = N(6)-((3R)-3,6-diaminohexanoyl)-L-lysyl-[protein] + AMP + diphosphate + H(+). With EpmB is involved in the beta-lysylation step of the post-translational modification of translation elongation factor P (EF-P). Catalyzes the ATP-dependent activation of (R)-beta-lysine produced by EpmB, forming a lysyl-adenylate, from which the beta-lysyl moiety is then transferred to the epsilon-amino group of a conserved specific lysine residue in EF-P. The chain is Elongation factor P--(R)-beta-lysine ligase from Buchnera aphidicola subsp. Acyrthosiphon pisum (strain APS) (Acyrthosiphon pisum symbiotic bacterium).